The sequence spans 310 residues: tRNA dimethylallyltransferase (310 aa).

Position 24–31 (24–31 (GPTASGKT)) interacts with ATP. 26–31 (TASGKT) lines the substrate pocket. Positions 49-52 (DSRQ) are interaction with substrate tRNA.

The protein belongs to the IPP transferase family. In terms of assembly, monomer. Requires Mg(2+) as cofactor.

The catalysed reaction is adenosine(37) in tRNA + dimethylallyl diphosphate = N(6)-dimethylallyladenosine(37) in tRNA + diphosphate. In terms of biological role, catalyzes the transfer of a dimethylallyl group onto the adenine at position 37 in tRNAs that read codons beginning with uridine, leading to the formation of N6-(dimethylallyl)adenosine (i(6)A). The sequence is that of tRNA dimethylallyltransferase from Synechococcus sp. (strain CC9311).